The sequence spans 346 residues: Heparan sulfate glucosamine 3-O-sulfotransferase 5 (346 aa).

Residues 1–12 (MLFKQQAWLRQK) lie on the Cytoplasmic side of the membrane. A helical; Signal-anchor for type II membrane protein membrane pass occupies residues 13–32 (LLVLGSLAVGSLLYLVARVG). Residues 33–346 (SLDRLQPICP…QITGRTLNWP (314 aa)) are Lumenal-facing. 100-104 (KGGTR) serves as a coordination point for 3'-phosphoadenylyl sulfate. Substrate-binding positions include 122–128 (EIHFFDN) and 155–158 (KSPA). 3'-phosphoadenylyl sulfate-binding residues include Arg183 and Ser191. 226–227 (YK) provides a ligand contact to substrate. The N-linked (GlcNAc...) asparagine glycan is linked to Asn287. Position 293 (Tyr293) interacts with 3'-phosphoadenylyl sulfate. A disulfide bond links Cys294 and Cys304. 309 to 313 (KGRIH) contacts 3'-phosphoadenylyl sulfate.

The protein belongs to the sulfotransferase 1 family. As to expression, highly expressed in skeletal muscle and fetal brain, and also found in adult brain, spinal cord, cerebellum and colon.

The protein resides in the golgi apparatus membrane. It catalyses the reaction alpha-D-glucosaminyl-[heparan sulfate](n) + 3'-phosphoadenylyl sulfate = 3-sulfo-alpha-D-glucosaminyl-[heparan sulfate](n) + adenosine 3',5'-bisphosphate + H(+). Sulfotransferase that utilizes 3'-phospho-5'-adenylyl sulfate (PAPS) to catalyze the transfer of a sulfo group to position 3 of glucosamine residues in heparan. Catalyzes the rate limiting step in the biosynthesis of heparan sulfate (HSact). This modification is a crucial step in the biosynthesis of anticoagulant heparan sulfate as it completes the structure of the antithrombin pentasaccharide binding site. Also generates GlcUA-GlcNS or IdoUA-GlcNS and IdoUA2S-GlcNH2. The substrate-specific O-sulfation generates an enzyme-modified heparan sulfate which acts as a binding receptor to Herpes simplex virus-1 (HSV-1) and permits its entry. This is Heparan sulfate glucosamine 3-O-sulfotransferase 5 (HS3ST5) from Homo sapiens (Human).